The chain runs to 361 residues: Peptide chain release factor 1 (361 aa).

Position 236 is an N5-methylglutamine (glutamine 236). The tract at residues alanine 286 to glutamate 306 is disordered.

Belongs to the prokaryotic/mitochondrial release factor family. Methylated by PrmC. Methylation increases the termination efficiency of RF1.

It is found in the cytoplasm. Peptide chain release factor 1 directs the termination of translation in response to the peptide chain termination codons UAG and UAA. The polypeptide is Peptide chain release factor 1 (Magnetococcus marinus (strain ATCC BAA-1437 / JCM 17883 / MC-1)).